The primary structure comprises 506 residues: Probable alpha-L-arabinofuranosidase B (506 aa).

Residues 1 to 26 (MLLPRGFNRAVVTALGVVGTGTLVAA) form the signal peptide. The catalytic stretch occupies residues 27-343 (GPCDIYSSGG…ANIVAAKYAV (317 aa)). Cystine bridges form between C29–C39, C89–C94, and C184–C185. D227 contributes to the substrate binding site. Catalysis depends on E229, which acts as the Nucleophile. Substrate is bound at residue N230. The N-linked (GlcNAc...) asparagine glycan is linked to N285. G304 contacts substrate. D305 serves as the catalytic Proton donor. The tract at residues 344-506 (APLTSGPSLT…VSWVVSTSFA (163 aa)) is ABD. N375 carries an N-linked (GlcNAc...) asparagine glycan. A disulfide bridge connects residues C409 and C447. H424, F427, D443, H471, L476, and D496 together coordinate substrate.

The protein belongs to the glycosyl hydrolase 54 family.

The protein resides in the secreted. The enzyme catalyses Hydrolysis of terminal non-reducing alpha-L-arabinofuranoside residues in alpha-L-arabinosides.. The protein operates within glycan metabolism; L-arabinan degradation. In terms of biological role, alpha-L-arabinofuranosidase involved in the degradation of arabinoxylan, a major component of plant hemicellulose. Able to hydrolyze 1,5-, 1,3- and 1,2-alpha-linkages not only in L-arabinofuranosyl oligosaccharides, but also in polysaccharides containing terminal non-reducing L-arabinofuranoses in side chains, like L-arabinan, arabinogalactan and arabinoxylan. This Aspergillus terreus (strain NIH 2624 / FGSC A1156) protein is Probable alpha-L-arabinofuranosidase B (abfB).